We begin with the raw amino-acid sequence, 343 residues long: 3-dehydroquinate synthase (343 aa).

NAD(+) contacts are provided by residues 61–66 (SGEKYK), 95–99 (GVISD), 119–120 (TT), Lys-132, Lys-141, and 159–162 (FLKT). Zn(2+) contacts are provided by Glu-174, His-231, and His-248.

This sequence belongs to the sugar phosphate cyclases superfamily. Dehydroquinate synthase family. The cofactor is Co(2+). Zn(2+) serves as cofactor. Requires NAD(+) as cofactor.

The protein resides in the cytoplasm. The enzyme catalyses 7-phospho-2-dehydro-3-deoxy-D-arabino-heptonate = 3-dehydroquinate + phosphate. It participates in metabolic intermediate biosynthesis; chorismate biosynthesis; chorismate from D-erythrose 4-phosphate and phosphoenolpyruvate: step 2/7. In terms of biological role, catalyzes the conversion of 3-deoxy-D-arabino-heptulosonate 7-phosphate (DAHP) to dehydroquinate (DHQ). The sequence is that of 3-dehydroquinate synthase from Helicobacter pylori (strain G27).